The chain runs to 881 residues: Serine/threonine-protein phosphatase 6 regulatory subunit 1 (881 aa).

Residues 10 to 403 form an interaction with PPP6C region; that stretch reads SSHLDTLLER…VFNNFLHAQV (394 aa). Phosphoserine is present on Ser-232. Thr-524 carries the phosphothreonine modification. Phosphoserine occurs at positions 529, 530, 531, 635, and 638. Composition is skewed to acidic residues over residues 621–642 and 669–686; these read DDDE…DGED and DSED…DEEG. The interval 621–881 is disordered; the sequence is DDDEEEEDEE…PEGPASPGSQ (261 aa). Pro residues predominate over residues 700–710; it reads YPSPGPQPPGP. 3 positions are modified to phosphoserine: Ser-702, Ser-726, and Ser-759. Over residues 814-830 the composition is skewed to polar residues; that stretch reads APSSSDSATRDPSTSVP. Ser-846 is modified (phosphoserine).

This sequence belongs to the SAPS family. Protein phosphatase 6 (PP6) holoenzyme is proposed to be a heterotrimeric complex formed of the catalytic subunit, a SAPS domain-containing subunit (PP6R) and an ankyrin repeat-domain containing regulatory subunit (ARS). Interacts with PPP6C and NFKBIE. Interacts with ANKRD28, ANKRD44 and ANKRD52. As to expression, ubiquitous with higher expression in testis.

The protein resides in the cytoplasm. Regulatory subunit of protein phosphatase 6 (PP6). May function as a scaffolding PP6 subunit. Involved in the PP6-mediated dephosphorylation of NFKBIE opposing its degradation in response to TNF-alpha. The sequence is that of Serine/threonine-protein phosphatase 6 regulatory subunit 1 (PPP6R1) from Homo sapiens (Human).